The chain runs to 310 residues: MEPEVIRDKDSMRKWSRAMRSQGKTIGLVPTMGYLHEGHLSLVRQSLALTDVTVVSIYVNPGQFSPTEDLSTYPSDFSGDLTKLAALSGGKVVVFNPKNLYDYGGETKKINDGGGNGGRVVSCVEEGGLGHETWIRVERLEKGFCGKSRPVFFRGVATIVTKLFNIVEPDVALFGKKDYQQWRIIQRMVRDLNFGIEIVGSDIAREKDGLAMSSRNVRLSDEERQRALSISRSLAMAKASVAEGKTNCAELKDMIIQQVVGSAGRVDYVEIVDQETLEGVEEIKSGVVICVAAWFGTVRLIDNIEINVSL.

32–39 is a binding site for ATP; that stretch reads MGYLHEGH. Catalysis depends on His39, which acts as the Proton donor. A (R)-pantoate-binding site is contributed by Gln63. Position 63 (Gln63) interacts with beta-alanine. Position 175 to 178 (175 to 178) interacts with ATP; sequence GKKD. Gln181 lines the (R)-pantoate pocket. Residue 212-215 participates in ATP binding; the sequence is MSSR.

It belongs to the pantothenate synthetase family. As to quaternary structure, homodimer. In terms of tissue distribution, expressed in roots, cotyledons, leaves, stems, cauline leaves, stigma, sepals and petals.

Its subcellular location is the cytoplasm. It localises to the cytosol. It catalyses the reaction (R)-pantoate + beta-alanine + ATP = (R)-pantothenate + AMP + diphosphate + H(+). It participates in cofactor biosynthesis; (R)-pantothenate biosynthesis; (R)-pantothenate from (R)-pantoate and beta-alanine: step 1/1. Enzyme kinetics do not match Michaelis-Menten kinetics, suggesting allosteric behavior. Inhibited by high pantoate levels. Catalyzes the condensation of pantoate with beta-alanine to form pantothenate. Essential for panthotenate biosynthesis. The polypeptide is Pantoate--beta-alanine ligase (Arabidopsis thaliana (Mouse-ear cress)).